We begin with the raw amino-acid sequence, 159 residues long: MKIRVGHGYDVHRWGSDKPLILGGVEIEHHQGLVAHSDGDVVLHAVTDAVLGALALGDIGQHFPDTDERYAGADSAELLSHAVSLCQEKEFKTGNIDVTIVAQAPKMAPHIDDMRSSIAQCLKTCIDNVNVKATTTEKLGFVGREEGIACHAVVLMESF.

The a divalent metal cation site is built by Asp10 and His12. Residues 10–12 (DVH) and 36–37 (HS) each bind 4-CDP-2-C-methyl-D-erythritol 2-phosphate. His44 is a binding site for a divalent metal cation. 4-CDP-2-C-methyl-D-erythritol 2-phosphate is bound by residues 58 to 60 (DIG), 63 to 67 (FPDTD), 102 to 108 (AQAPKMA), 134 to 137 (TTTE), Phe141, and Arg144.

Belongs to the IspF family. In terms of assembly, homotrimer. A divalent metal cation serves as cofactor.

It carries out the reaction 4-CDP-2-C-methyl-D-erythritol 2-phosphate = 2-C-methyl-D-erythritol 2,4-cyclic diphosphate + CMP. Its pathway is isoprenoid biosynthesis; isopentenyl diphosphate biosynthesis via DXP pathway; isopentenyl diphosphate from 1-deoxy-D-xylulose 5-phosphate: step 4/6. In terms of biological role, involved in the biosynthesis of isopentenyl diphosphate (IPP) and dimethylallyl diphosphate (DMAPP), two major building blocks of isoprenoid compounds. Catalyzes the conversion of 4-diphosphocytidyl-2-C-methyl-D-erythritol 2-phosphate (CDP-ME2P) to 2-C-methyl-D-erythritol 2,4-cyclodiphosphate (ME-CPP) with a corresponding release of cytidine 5-monophosphate (CMP). This is 2-C-methyl-D-erythritol 2,4-cyclodiphosphate synthase from Idiomarina loihiensis (strain ATCC BAA-735 / DSM 15497 / L2-TR).